A 144-amino-acid polypeptide reads, in one-letter code: 3-hydroxyacyl-[acyl-carrier-protein] dehydratase FabZ (144 aa).

Residue histidine 47 is part of the active site.

The protein belongs to the thioester dehydratase family. FabZ subfamily.

Its subcellular location is the cytoplasm. The enzyme catalyses a (3R)-hydroxyacyl-[ACP] = a (2E)-enoyl-[ACP] + H2O. Involved in unsaturated fatty acids biosynthesis. Catalyzes the dehydration of short chain beta-hydroxyacyl-ACPs and long chain saturated and unsaturated beta-hydroxyacyl-ACPs. This is 3-hydroxyacyl-[acyl-carrier-protein] dehydratase FabZ from Dechloromonas aromatica (strain RCB).